The chain runs to 307 residues: Membrane protein insertase YidC 1 (307 aa).

An N-terminal signal peptide occupies residues 1–22 (MKSKKGLTLTITLGTLALFLSG). A lipid anchor (N-palmitoyl cysteine) is attached at Cys-23. Residue Cys-23 is the site of S-diacylglycerol cysteine attachment. A run of 5 helical transmembrane segments spans residues 59–79 (YGWA…PMMI), 136–156 (GIGC…YYAI), 177–197 (LILA…SMIG), 205–225 (TMRL…MSAP), and 226–246 (AGLG…TLII). A disordered region spans residues 260-307 (ELKKHPIKTPTPTQPKPINATESKPSHPRPQNNAGRGRNAGKQQRHHK).

Belongs to the OXA1/ALB3/YidC family. Type 2 subfamily.

Its subcellular location is the cell membrane. In terms of biological role, required for the insertion and/or proper folding and/or complex formation of integral membrane proteins into the membrane. Involved in integration of membrane proteins that insert both dependently and independently of the Sec translocase complex, as well as at least some lipoproteins. This Lactiplantibacillus plantarum (strain ATCC BAA-793 / NCIMB 8826 / WCFS1) (Lactobacillus plantarum) protein is Membrane protein insertase YidC 1.